Reading from the N-terminus, the 239-residue chain is Serine protease SplC (239 aa).

Positions 1 to 36 (MNKNIVIKSMAALAILTSVTGINAAVVDETQQIANA) are cleaved as a signal peptide. Active-site charge relay system residues include histidine 75, aspartate 113, and serine 193.

This sequence belongs to the peptidase S1B family.

Its subcellular location is the secreted. This is Serine protease SplC (splC) from Staphylococcus aureus (strain bovine RF122 / ET3-1).